The following is a 429-amino-acid chain: Adenylosuccinate synthetase (429 aa).

GTP contacts are provided by residues 12–18 (GDEGKGK) and 40–42 (GHT). Residue aspartate 13 is the Proton acceptor of the active site. Mg(2+) is bound by residues aspartate 13 and glycine 40. IMP contacts are provided by residues 13–16 (DEGK), 38–41 (NAGH), threonine 129, arginine 143, glutamine 223, threonine 238, and arginine 302. The Proton donor role is filled by histidine 41. 298–304 (VVTGRKR) serves as a coordination point for substrate. GTP contacts are provided by residues arginine 304, 330–332 (KLD), and 412–414 (STS).

It belongs to the adenylosuccinate synthetase family. In terms of assembly, homodimer. Requires Mg(2+) as cofactor.

The protein resides in the cytoplasm. It catalyses the reaction IMP + L-aspartate + GTP = N(6)-(1,2-dicarboxyethyl)-AMP + GDP + phosphate + 2 H(+). Its pathway is purine metabolism; AMP biosynthesis via de novo pathway; AMP from IMP: step 1/2. Its function is as follows. Plays an important role in the de novo pathway of purine nucleotide biosynthesis. Catalyzes the first committed step in the biosynthesis of AMP from IMP. The polypeptide is Adenylosuccinate synthetase (Brucella ovis (strain ATCC 25840 / 63/290 / NCTC 10512)).